The sequence spans 436 residues: uncharacterized protein (436 aa).

This is an uncharacterized protein from Arabidopsis thaliana (Mouse-ear cress).